A 277-amino-acid chain; its full sequence is E3 ubiquitin-protein ligase CCNB1IP1 (277 aa).

The RING-type; atypical zinc-finger motif lies at 4-51; the sequence is CEDMLLCNYRKCRIKLSGYAWVTACSHIFCDQHGSGEFSRSPAICPAC. The stretch at 127–182 forms a coiled coil; that stretch reads QQIQSKDVELTSMKGEVTSMKKVLEEYKKKFSDISEKLMERNRQYQKLQGLYDSLR.

As to quaternary structure, interacts with CCNB1, UBE2L3 and NF2. Post-translationally, ubiquitinated; autoubiquitinated. In terms of processing, phosphorylated by CDK1 on serine or threonine residues (in vitro). In terms of tissue distribution, highly expressed in heart. Detected at intermediate levels in liver and kidney, and at low levels in placenta, brain and lung.

The protein localises to the nucleus. Its subcellular location is the chromosome. The catalysed reaction is S-ubiquitinyl-[E2 ubiquitin-conjugating enzyme]-L-cysteine + [acceptor protein]-L-lysine = [E2 ubiquitin-conjugating enzyme]-L-cysteine + N(6)-ubiquitinyl-[acceptor protein]-L-lysine.. It functions in the pathway protein modification; protein ubiquitination. In terms of biological role, ubiquitin E3 ligase that acts as a limiting factor for crossing-over during meiosis: required during zygonema to limit the colocalization of RNF212 with MutS-gamma-associated recombination sites and thereby establish early differentiation of crossover and non-crossover sites. Later, it is directed by MutL-gamma to stably accumulate at designated crossover sites. Probably promotes the dissociation of RNF212 and MutS-gamma to allow the progression of recombination and the implementation of the final steps of crossing over. Modulates cyclin-B levels and participates in the regulation of cell cycle progression through the G2 phase. Overexpression causes delayed entry into mitosis. This Homo sapiens (Human) protein is E3 ubiquitin-protein ligase CCNB1IP1 (CCNB1IP1).